Consider the following 225-residue polypeptide: MIEFEKRLVAREALKLIGDVKLLGLGSGSTVAIFVEELAKSDKAGKIKVIPSSKQIEEVARNQGLEVIYPDGERPEITVDGADEIDSNLNLLKGGGGALLREKVLAYNSSTYVIIADHTKLVEKLCSKRALPVEVLPYGVSWTLGNLIKRFNCDARIRIKDLSPFITDNGNVIVDINCPPLEDPASMESEVKGVPGVVEVGIFVGLADLVLIARGSEVKVLRQGF.

Substrate is bound by residues 27–30 (SGST), 80–83 (DGAD), and 93–96 (KGGG). The Proton acceptor role is filled by Glu102. Lys120 provides a ligand contact to substrate.

This sequence belongs to the ribose 5-phosphate isomerase family. In terms of assembly, homodimer.

The catalysed reaction is aldehydo-D-ribose 5-phosphate = D-ribulose 5-phosphate. Its pathway is carbohydrate degradation; pentose phosphate pathway; D-ribose 5-phosphate from D-ribulose 5-phosphate (non-oxidative stage): step 1/1. Functionally, catalyzes the reversible conversion of ribose-5-phosphate to ribulose 5-phosphate. The chain is Ribose-5-phosphate isomerase A from Korarchaeum cryptofilum (strain OPF8).